The following is a 353-amino-acid chain: Photosystem II protein D1 (353 aa).

Thr-2 bears the N-acetylthreonine mark. Residue Thr-2 is modified to Phosphothreonine. 3 helical membrane-spanning segments follow: residues 29 to 46 (YIGW…TATS), 118 to 133 (HFLL…EWEL), and 142 to 156 (WIAV…AATA). His-118 lines the chlorophyll a pocket. Residue Tyr-126 participates in pheophytin a binding. [CaMn4O5] cluster-binding residues include Asp-170 and Glu-189. A helical transmembrane segment spans residues 197–218 (FHMLGVAGVFGGSLFSAMHGSL). His-198 contributes to the chlorophyll a binding site. A quinone-binding positions include His-215 and 264–265 (SF). Residue His-215 coordinates Fe cation. Position 272 (His-272) interacts with Fe cation. A helical transmembrane segment spans residues 274-288 (FLAAWPVIGIWFTAL). His-332, Glu-333, Asp-342, and Ala-344 together coordinate [CaMn4O5] cluster. Residues 345-353 (AIEAPSTNG) constitute a propeptide that is removed on maturation.

This sequence belongs to the reaction center PufL/M/PsbA/D family. As to quaternary structure, PSII is composed of 1 copy each of membrane proteins PsbA, PsbB, PsbC, PsbD, PsbE, PsbF, PsbH, PsbI, PsbJ, PsbK, PsbL, PsbM, PsbT, PsbX, PsbY, PsbZ, Psb30/Ycf12, at least 3 peripheral proteins of the oxygen-evolving complex and a large number of cofactors. It forms dimeric complexes. The D1/D2 heterodimer binds P680, chlorophylls that are the primary electron donor of PSII, and subsequent electron acceptors. It shares a non-heme iron and each subunit binds pheophytin, quinone, additional chlorophylls, carotenoids and lipids. D1 provides most of the ligands for the Mn4-Ca-O5 cluster of the oxygen-evolving complex (OEC). There is also a Cl(-1) ion associated with D1 and D2, which is required for oxygen evolution. The PSII complex binds additional chlorophylls, carotenoids and specific lipids. serves as cofactor. Post-translationally, tyr-161 forms a radical intermediate that is referred to as redox-active TyrZ, YZ or Y-Z. C-terminally processed by CTPA; processing is essential to allow assembly of the oxygen-evolving complex and thus photosynthetic growth.

The protein resides in the plastid. It is found in the chloroplast thylakoid membrane. It carries out the reaction 2 a plastoquinone + 4 hnu + 2 H2O = 2 a plastoquinol + O2. In terms of biological role, photosystem II (PSII) is a light-driven water:plastoquinone oxidoreductase that uses light energy to abstract electrons from H(2)O, generating O(2) and a proton gradient subsequently used for ATP formation. It consists of a core antenna complex that captures photons, and an electron transfer chain that converts photonic excitation into a charge separation. The D1/D2 (PsbA/PsbD) reaction center heterodimer binds P680, the primary electron donor of PSII as well as several subsequent electron acceptors. This chain is Photosystem II protein D1, found in Amaranthus hybridus (Slim amaranth).